A 278-amino-acid polypeptide reads, in one-letter code: Insulin-like growth factor-binding protein-like 1 (278 aa).

An N-terminal signal peptide occupies residues 1-25 (MPRLSLLLPLLLLLLLPLLPPLSPS). The 76-residue stretch at 34 to 109 (RRPKCGPCRP…PEGTGLCVCA (76 aa)) folds into the IGFBP N-terminal domain. Intrachain disulfides connect C38–C63, C41–C65, C46–C66, C52–C69, C77–C91, C85–C106, and C115–C151. Residues 95-153 (AAGAAPEGTGLCVCAQRGTVCGSDGRSYPSVCALRLRARHTPRAHPGHLHKARDGPCEF) form the Kazal-like domain. An Ig-like C2-type domain is found at 155-259 (PVVVVPPRSV…GEAESHSTVT (105 aa)). A glycan (N-linked (GlcNAc...) asparagine) is linked at N166. C176 and C243 are joined by a disulfide.

As to expression, expressed at the highest level in both brain and testis, with lower levels in the prostate, bladder and lung.

It is found in the secreted. In terms of biological role, IGF-binding proteins prolong the half-life of IGFs and have been shown to either inhibit or stimulate the growth promoting effects of the IGFs in cell culture. They alter the interaction of IGFs with their cell surface receptors. May be a putative tumor suppressor protein. In Homo sapiens (Human), this protein is Insulin-like growth factor-binding protein-like 1 (IGFBPL1).